Here is a 192-residue protein sequence, read N- to C-terminus: ATP-dependent Clp protease proteolytic subunit 1 (192 aa).

Ser-92 serves as the catalytic Nucleophile. His-117 is a catalytic residue.

Belongs to the peptidase S14 family. In terms of assembly, fourteen ClpP subunits assemble into 2 heptameric rings which stack back to back to give a disk-like structure with a central cavity, resembling the structure of eukaryotic proteasomes.

It localises to the cytoplasm. It carries out the reaction Hydrolysis of proteins to small peptides in the presence of ATP and magnesium. alpha-casein is the usual test substrate. In the absence of ATP, only oligopeptides shorter than five residues are hydrolyzed (such as succinyl-Leu-Tyr-|-NHMec, and Leu-Tyr-Leu-|-Tyr-Trp, in which cleavage of the -Tyr-|-Leu- and -Tyr-|-Trp bonds also occurs).. In terms of biological role, cleaves peptides in various proteins in a process that requires ATP hydrolysis. Has a chymotrypsin-like activity. Plays a major role in the degradation of misfolded proteins. This chain is ATP-dependent Clp protease proteolytic subunit 1, found in Chlamydia trachomatis serovar D (strain ATCC VR-885 / DSM 19411 / UW-3/Cx).